We begin with the raw amino-acid sequence, 338 residues long: Glycerol-3-phosphate dehydrogenase [NAD(P)+] (338 aa).

Residues serine 13, tryptophan 14, and lysine 108 each coordinate NADPH. Residues lysine 108, glycine 139, and serine 141 each coordinate sn-glycerol 3-phosphate. Position 143 (alanine 143) interacts with NADPH. Sn-glycerol 3-phosphate is bound by residues lysine 194, aspartate 247, serine 257, arginine 258, and asparagine 259. The active-site Proton acceptor is lysine 194. Arginine 258 contributes to the NADPH binding site. NADPH contacts are provided by valine 282 and glutamate 284.

This sequence belongs to the NAD-dependent glycerol-3-phosphate dehydrogenase family.

The protein localises to the cytoplasm. The catalysed reaction is sn-glycerol 3-phosphate + NAD(+) = dihydroxyacetone phosphate + NADH + H(+). It carries out the reaction sn-glycerol 3-phosphate + NADP(+) = dihydroxyacetone phosphate + NADPH + H(+). It participates in membrane lipid metabolism; glycerophospholipid metabolism. Functionally, catalyzes the reduction of the glycolytic intermediate dihydroxyacetone phosphate (DHAP) to sn-glycerol 3-phosphate (G3P), the key precursor for phospholipid synthesis. The protein is Glycerol-3-phosphate dehydrogenase [NAD(P)+] of Streptococcus uberis (strain ATCC BAA-854 / 0140J).